Consider the following 122-residue polypeptide: S-adenosylmethionine decarboxylase proenzyme (122 aa).

Catalysis depends on S69, which acts as the Schiff-base intermediate with substrate; via pyruvic acid. S69 carries the pyruvic acid (Ser); by autocatalysis modification. Residue H74 is the Proton acceptor; for processing activity of the active site. C89 serves as the catalytic Proton donor; for catalytic activity.

It belongs to the prokaryotic AdoMetDC family. Type 1 subfamily. Heterotetramer of two alpha and two beta chains arranged as a dimer of alpha/beta heterodimers. It depends on pyruvate as a cofactor. Is synthesized initially as an inactive proenzyme. Formation of the active enzyme involves a self-maturation process in which the active site pyruvoyl group is generated from an internal serine residue via an autocatalytic post-translational modification. Two non-identical subunits are generated from the proenzyme in this reaction, and the pyruvate is formed at the N-terminus of the alpha chain, which is derived from the carboxyl end of the proenzyme. The post-translation cleavage follows an unusual pathway, termed non-hydrolytic serinolysis, in which the side chain hydroxyl group of the serine supplies its oxygen atom to form the C-terminus of the beta chain, while the remainder of the serine residue undergoes an oxidative deamination to produce ammonia and the pyruvoyl group blocking the N-terminus of the alpha chain.

The catalysed reaction is S-adenosyl-L-methionine + H(+) = S-adenosyl 3-(methylsulfanyl)propylamine + CO2. It functions in the pathway amine and polyamine biosynthesis; S-adenosylmethioninamine biosynthesis; S-adenosylmethioninamine from S-adenosyl-L-methionine: step 1/1. Functionally, catalyzes the decarboxylation of S-adenosylmethionine to S-adenosylmethioninamine (dcAdoMet), the propylamine donor required for the synthesis of the polyamines spermine and spermidine from the diamine putrescine. This is S-adenosylmethionine decarboxylase proenzyme from Sulfolobus acidocaldarius (strain ATCC 33909 / DSM 639 / JCM 8929 / NBRC 15157 / NCIMB 11770).